The chain runs to 643 residues: Threonine--tRNA ligase (643 aa).

Residues 1 to 61 (MPTIKFIDGT…TNDSIVKFVY (61 aa)) enclose the TGS domain. The catalytic stretch occupies residues 244-535 (DHRKISKILD…LIEEYIGNFP (292 aa)). Positions 335, 386, and 512 each coordinate Zn(2+).

It belongs to the class-II aminoacyl-tRNA synthetase family. Homodimer. Requires Zn(2+) as cofactor.

The protein localises to the cytoplasm. The catalysed reaction is tRNA(Thr) + L-threonine + ATP = L-threonyl-tRNA(Thr) + AMP + diphosphate + H(+). Functionally, catalyzes the attachment of threonine to tRNA(Thr) in a two-step reaction: L-threonine is first activated by ATP to form Thr-AMP and then transferred to the acceptor end of tRNA(Thr). Also edits incorrectly charged L-seryl-tRNA(Thr). The sequence is that of Threonine--tRNA ligase from Buchnera aphidicola subsp. Baizongia pistaciae (strain Bp).